The chain runs to 942 residues: UvrABC system protein A (942 aa).

Residue 32–39 (GLSGSGKS) coordinates ATP. Residues 251 to 278 (CPVCGFTVPELEPRLFSFNAPFGSCPTC) form a C4-type zinc finger. ABC transporter domains are found at residues 308–589 (WNPI…KKSI) and 609–937 (GNGR…HYLK). 641–648 (GVSGSGKS) contributes to the ATP binding site. The segment at 740-766 (CEACSGDGIIKIEMHFLPDVYVPCEVC) adopts a C4-type zinc-finger fold.

This sequence belongs to the ABC transporter superfamily. UvrA family. In terms of assembly, forms a heterotetramer with UvrB during the search for lesions.

It localises to the cytoplasm. Its function is as follows. The UvrABC repair system catalyzes the recognition and processing of DNA lesions. UvrA is an ATPase and a DNA-binding protein. A damage recognition complex composed of 2 UvrA and 2 UvrB subunits scans DNA for abnormalities. When the presence of a lesion has been verified by UvrB, the UvrA molecules dissociate. The protein is UvrABC system protein A of Streptococcus pyogenes serotype M18 (strain MGAS8232).